We begin with the raw amino-acid sequence, 283 residues long: MARRPGVPAAYGDEFSFVSPLVKYLLFFFNMLFWVISMVMVAVGVYARLMKHAEAALACLAVDPAILLIVVGVLMFLLTFCGCIGSLRENICLLQTFSLCLTIVFLLQLAAGILGFVFSDKARGKVSEIINNAIVHYRDDLDLQNLIDFGQKKFSCCGGISYRDWSQNMYFNCSEDNPSRERCSVPYSCCLPTPNQAVINTMCGQGMQALDYLEASKVIYTNGCIDKLVNWIHSNLFLLGGVALGLAIPQLVGILLSQVLVNQIKDQIKLQLYNQQHRADPWY.

At 1–24 the chain is on the cytoplasmic side; the sequence is MARRPGVPAAYGDEFSFVSPLVKY. A helical transmembrane segment spans residues 25-45; it reads LLFFFNMLFWVISMVMVAVGV. Over 46–64 the chain is Extracellular; that stretch reads YARLMKHAEAALACLAVDP. A helical membrane pass occupies residues 65 to 85; the sequence is AILLIVVGVLMFLLTFCGCIG. The Cytoplasmic portion of the chain corresponds to 86-96; it reads SLRENICLLQT. A helical transmembrane segment spans residues 97 to 117; it reads FSLCLTIVFLLQLAAGILGFV. At 118-235 the chain is on the extracellular side; the sequence is FSDKARGKVS…DKLVNWIHSN (118 aa). Intrachain disulfides connect C156–C224, C157–C189, C173–C183, and C190–C203. N-linked (GlcNAc...) asparagine glycosylation occurs at N172. A helical transmembrane segment spans residues 236 to 256; the sequence is LFLLGGVALGLAIPQLVGILL. The Cytoplasmic segment spans residues 257–283; the sequence is SQVLVNQIKDQIKLQLYNQQHRADPWY.

This sequence belongs to the tetraspanin (TM4SF) family. Homodimer; disulfide-linked. Interacts (via extracellular domain) with ADAM10 (via extracellular domain). Interacts (via cytoplasmic domain) with PLEKHA7 (via WW domains); the interaction is dependent on PDZD11 being bound to PLEKHA7 and facilitates the docking of ADAM10 to zonula adherens. Predominantly expressed in erythroblasts.

The protein resides in the cell membrane. Its subcellular location is the cell junction. The protein localises to the adherens junction. It localises to the cytoplasm. Functionally, part of TspanC8 subgroup, composed of 6 members that interact with the transmembrane metalloprotease ADAM10. This interaction is required for ADAM10 exit from the endoplasmic reticulum and for enzymatic maturation and trafficking to the cell surface as well as substrate specificity. Different TspanC8/ADAM10 complexes have distinct substrates. Plays an important role in normal erythropoiesis. It has a role in the differentiation of erythroid progenitors. Negatively regulates ligand-induced Notch activity probably by regulating ADAM10 activity. Mediates docking of ADAM10 to zonula adherens by interacting with ADAM10 and, in a PDZD11-dependent manner, with the zonula adherens protein PLEKHA7. The chain is Tetraspanin-33 (Tspan33) from Mus musculus (Mouse).